The sequence spans 627 residues: (+)-sabinene synthase, chloroplastic (627 aa).

A chloroplast-targeting transit peptide spans 1–46 (MSVISIVPLASNSCLYKSLMSSTHELKALCRPIATLGMCRRGKSVM). Positions 378, 382, and 530 each coordinate Mg(2+). A DDXXD motif motif is present at residues 378–382 (DDIYD).

The protein belongs to the terpene synthase family. Tpsd subfamily. As to quaternary structure, monomer. The cofactor is Mg(2+).

The protein resides in the plastid. Its subcellular location is the chloroplast. The enzyme catalyses (2E)-geranyl diphosphate = (1R,5R)-sabinene + diphosphate. Its pathway is terpene metabolism; oleoresin biosynthesis. In terms of biological role, terpene synthase (TPS) involved in defensive oleoresin formation in conifers in response to insect attack (e.g. white pine weevil P.strobi) or other injury. Produces (+)-sabinene from geranyl diphosphate, but has no activity with geranylgeranyl diphosphate or farnesyl diphosphate. The protein is (+)-sabinene synthase, chloroplastic (TPS-sab) of Picea sitchensis (Sitka spruce).